A 163-amino-acid polypeptide reads, in one-letter code: MPSFDIVSEITLYEIRNAVENANRVLSTRYDFRGVEATIELNEKAETIKVTTESDFQLEQLIEILISSCVKRDIQHNSLDIPADSEHSGKLYSKEIKLKQGIETDMAKKIIKLIKDAKLKVQTQIQGEQVRVSGKSRDDLQATIQLVKNAELGQPFQFNNFRD.

Belongs to the YajQ family.

Its function is as follows. Nucleotide-binding protein. The sequence is that of Nucleotide-binding protein HSM_1099 from Histophilus somni (strain 2336) (Haemophilus somnus).